Here is a 227-residue protein sequence, read N- to C-terminus: Acyl-protein thioesterase 1 (227 aa).

Active-site charge relay system residues include Ser-119, Asp-173, and His-207.

Belongs to the AB hydrolase superfamily. AB hydrolase 2 family.

It is found in the cytoplasm. The protein resides in the nucleus. The enzyme catalyses S-hexadecanoyl-L-cysteinyl-[protein] + H2O = L-cysteinyl-[protein] + hexadecanoate + H(+). Hydrolyzes fatty acids from S-acylated cysteine residues in proteins with a strong preference for palmitoylated G-alpha proteins over other acyl substrates. Mediates the deacylation of G-alpha proteins such as GPA1 in vivo, but has weak or no activity toward palmitoylated Ras proteins. Has weak lysophospholipase activity in vitro; however such activity may not exist in vivo. The polypeptide is Acyl-protein thioesterase 1 (Saccharomyces cerevisiae (strain ATCC 204508 / S288c) (Baker's yeast)).